We begin with the raw amino-acid sequence, 398 residues long: Argininosuccinate synthase (398 aa).

ATP contacts are provided by residues 9–17 and alanine 36; that span reads AYSGGLDTS. L-citrulline contacts are provided by tyrosine 87 and serine 92. Glycine 117 contacts ATP. L-aspartate is bound by residues threonine 119, asparagine 123, and aspartate 124. L-citrulline is bound at residue asparagine 123. Residues arginine 127, serine 176, serine 185, glutamate 261, and tyrosine 273 each contribute to the L-citrulline site.

It belongs to the argininosuccinate synthase family. Type 1 subfamily. In terms of assembly, homotetramer.

The protein resides in the cytoplasm. The catalysed reaction is L-citrulline + L-aspartate + ATP = 2-(N(omega)-L-arginino)succinate + AMP + diphosphate + H(+). The protein operates within amino-acid biosynthesis; L-arginine biosynthesis; L-arginine from L-ornithine and carbamoyl phosphate: step 2/3. This is Argininosuccinate synthase from Desulfotalea psychrophila (strain LSv54 / DSM 12343).